The primary structure comprises 281 residues: N-acetyltransferase ECO1 (281 aa).

The segment at 33-57 adopts a CCHH-type zinc-finger fold; sequence VKCDKCEMSYSSTSIEDRAIHEKYH. Positions 86 to 105 are disordered; sequence LSRSTGTITPLNSSPLKKSS. Residues 95 to 105 show a composition bias toward low complexity; that stretch reads PLNSSPLKKSS. An N6-acetyllysine; by autocatalysis modification is found at K223.

The protein belongs to the acetyltransferase family. ECO subfamily. Binds specifically to CHL12, RFC1, RFC2, RFC3, RFC4, RFC5 and RAD24 when members of an RFC complex. Interacts with CHL1 and MPS3. Autoacetylates in vitro.

The protein resides in the nucleus. Required for establishment of sister chromatid cohesion during S phase but not for its further maintenance during G2 or M phases or for loading the cohesin complex onto DNA. Interacts with the three known alternate replication factor C (RFC) complexes, suggesting that these complexes have essential but redundant activity in cohesion establishment. Acts by acetylating the cohesin complex component SMC3. In vitro, possesses acetyltransferase activity where it can acetylate itself and components of the cohesin complex (MCD1, IRR1 and PDS5), but is unable to acetylate histones. In Saccharomyces cerevisiae (strain ATCC 204508 / S288c) (Baker's yeast), this protein is N-acetyltransferase ECO1 (ECO1).